We begin with the raw amino-acid sequence, 254 residues long: MNSQFAGLTREACVALLASYPLSVGILAGQWIALHRYLQQLEALNQPLLHLDLMDGQFCPQFTVGPWAVEQLPQTFIKDVHLMVADQWTAAQACVKAGAHCITLQAEGDIHLHHTLSWLGQQTVPVIGGEMPVIRGISLCPATPLDVIIPILSDVEVIQLLAVNPGYGSKMRSSDLHERVAQLLCLLGDKREGKIIVIDGSLTQDQLPSLIAQGIDRVVSGSALFRDDRLAENTRSWRAMFKVAGDTTFLPSTA.

The chain crosses the membrane as a helical span at residues 14 to 34 (VALLASYPLSVGILAGQWIAL). A divalent metal cation is bound by residues His-50, Asp-52, and His-81. Residue Asp-52 is the Proton acceptor of the active site. Substrate contacts are provided by residues His-81, 166–169 (GYGS), 199–201 (DGS), and 221–222 (GS). Asp-199 is an a divalent metal cation binding site. Asp-199 serves as the catalytic Proton donor.

This sequence belongs to the ribulose-phosphate 3-epimerase family. A divalent metal cation serves as cofactor.

Its subcellular location is the cell membrane. In Salmonella paratyphi A (strain ATCC 9150 / SARB42), this protein is Putative epimerase LsrE (lsrE).